Reading from the N-terminus, the 354-residue chain is Guanine nucleotide-binding protein alpha-2 subunit (354 aa).

One can recognise a G-alpha domain in the interval 33 to 354; the sequence is KIYKVLLLGA…QHSLKEAGMF (322 aa). A G1 motif region spans residues 36–49; that stretch reads KVLLLGASDSGKST. D44, S45, G46, K47, S48, T49, D148, L173, T179, G201, N269, K270, D272, and A326 together coordinate GTP. S48 is a binding site for Mg(2+). The G2 motif stretch occupies residues 171–179; that stretch reads DILRSRNST. Position 179 (T179) interacts with Mg(2+). Residues 194-203 form a G3 motif region; that stretch reads IRMFDVGGQR. The segment at 265 to 272 is G4 motif; it reads ILFLNKFD. The segment at 324 to 329 is G5 motif; it reads TTAVDT.

The protein belongs to the G-alpha family. In terms of assembly, g proteins are composed of 3 units; alpha, beta and gamma. Binding of the beta-gamma subunit complex (git5-git11) to the alpha subunit (gpa2) facilitates interaction with GPCR git3. Interacts with GPCR git3; the interaction is direct and leads to activation of gpa2 upon glucose stimulation. Interacts with adenylate cyclase cyr1 (via N-terminus); the interaction is direct and serves to activate adenylate cyclase and cAMP-PKA signaling, to repress sexual development and gluconeogenesis. The cofactor is Mg(2+).

The protein localises to the cell membrane. In terms of biological role, alpha subunit of the heterotrimeric guanine nucleotide-binding protein (G protein) involved in glucose-induced cAMP signaling. Binds to its cognate transmembrane receptor git3, which senses extracellular glucose, and activates cAMP-PKA signaling to repress sexual development and gluconeogenesis. The polypeptide is Guanine nucleotide-binding protein alpha-2 subunit (Schizosaccharomyces pombe (strain 972 / ATCC 24843) (Fission yeast)).